We begin with the raw amino-acid sequence, 325 residues long: D-alanine--D-alanine ligase (325 aa).

The region spanning 121 to 316 is the ATP-grasp domain; sequence KYVFEGCGLP…FEELVVRILR (196 aa). Residue 147–202 coordinates ATP; the sequence is VAALGTPLSVKPAHEGSSIGIRKVNSAAELAEAYEAAARLDDLVLVEQWIEGPEFT. Residues Asp-270, Glu-283, and Asn-285 each coordinate Mg(2+).

It belongs to the D-alanine--D-alanine ligase family. Mg(2+) is required as a cofactor. Mn(2+) serves as cofactor.

Its subcellular location is the cytoplasm. It carries out the reaction 2 D-alanine + ATP = D-alanyl-D-alanine + ADP + phosphate + H(+). It participates in cell wall biogenesis; peptidoglycan biosynthesis. Cell wall formation. This chain is D-alanine--D-alanine ligase, found in Marinobacter nauticus (strain ATCC 700491 / DSM 11845 / VT8) (Marinobacter aquaeolei).